A 741-amino-acid chain; its full sequence is Multifunctional procollagen lysine hydroxylase and glycosyltransferase LH3 (741 aa).

Positions 1–27 (MAASVPEPRLLLLLLLLLPPLPPVTSA) are cleaved as a signal peptide. Positions 28 to 293 (SDRPRGANPV…FCNLNRRTLP (266 aa)) are required for glycosyltransferase activity. UDP is bound at residue 47–49 (VAT). N-linked (GlcNAc...) asparagine glycosylation occurs at asparagine 66. Aspartate 115, aspartate 118, and histidine 256 together coordinate Mn(2+). 115 to 117 (DSY) is a UDP binding site. Position 259 to 262 (259 to 262 (GPTK)) interacts with UDP. Intrachain disulfides connect cysteine 282-cysteine 285 and cysteine 382-cysteine 388. The interval 298-523 (PPRVLLAVFV…EFGRLLSTSH (226 aa)) is accessory region. A glycan (N-linked (GlcNAc...) asparagine) is linked at asparagine 551. Cysteines 566 and 701 form a disulfide. 2-oxoglutarate contacts are provided by arginine 602 and tyrosine 659. The 92-residue stretch at 650-741 (RAVMNFVVRY…RYIMVSFVDP (92 aa)) folds into the Fe2OG dioxygenase domain. Fe cation-binding residues include histidine 670 and aspartate 672. The important for dimerization stretch occupies residues 675-718 (TFTLNVALNHKGVDYEGGGCRFLRYDCRVSSPRKGWALLHPGRL). Asparagine 679 provides a ligand contact to 2-oxoglutarate. Residue histidine 722 coordinates Fe cation. A 2-oxoglutarate-binding site is contributed by arginine 732.

Homodimer. It depends on Fe(2+) as a cofactor. Requires L-ascorbate as cofactor. Mn(2+) is required as a cofactor. Detected in heart and bone.

The protein localises to the rough endoplasmic reticulum. It localises to the endoplasmic reticulum lumen. Its subcellular location is the endoplasmic reticulum membrane. The protein resides in the secreted. It is found in the extracellular space. The catalysed reaction is L-lysyl-[collagen] + 2-oxoglutarate + O2 = (5R)-5-hydroxy-L-lysyl-[collagen] + succinate + CO2. It carries out the reaction (5R)-5-hydroxy-L-lysyl-[collagen] + UDP-alpha-D-galactose = (5R)-5-O-(beta-D-galactosyl)-5-hydroxy-L-lysyl-[collagen] + UDP + H(+). It catalyses the reaction (5R)-5-O-(beta-D-galactosyl)-5-hydroxy-L-lysyl-[collagen] + UDP-alpha-D-glucose = (5R)-5-O-[alpha-D-glucosyl-(1-&gt;2)-beta-D-galactosyl]-5-hydroxy-L-lysyl-[collagen] + UDP + H(+). Functionally, multifunctional enzyme that catalyzes a series of post-translational modifications on Lys residues in procollagen. Plays a redundant role in catalyzing the formation of hydroxylysine residues in -Xaa-Lys-Gly- sequences in collagens. Plays a redundant role in catalyzing the transfer of galactose onto hydroxylysine groups, giving rise to galactosyl 5-hydroxylysine. Has an essential role by catalyzing the subsequent transfer of glucose moieties, giving rise to 1,2-glucosylgalactosyl-5-hydroxylysine residues. Catalyzes hydroxylation and glycosylation of Lys residues in the MBL1 collagen-like domain, giving rise to hydroxylysine and 1,2-glucosylgalactosyl-5-hydroxylysine residues. Catalyzes hydroxylation and glycosylation of Lys residues in the ADIPOQ collagen-like domain, giving rise to hydroxylysine and 1,2-glucosylgalactosyl-5-hydroxylysine residues. Essential for normal biosynthesis and secretion of type IV collagens. Essential for normal formation of basement membranes. This is Multifunctional procollagen lysine hydroxylase and glycosyltransferase LH3 (Plod3) from Rattus norvegicus (Rat).